The sequence spans 214 residues: ATP-dependent Clp protease proteolytic subunit (214 aa).

S114 functions as the Nucleophile in the catalytic mechanism. H139 is an active-site residue.

Belongs to the peptidase S14 family. As to quaternary structure, fourteen ClpP subunits assemble into 2 heptameric rings which stack back to back to give a disk-like structure with a central cavity, resembling the structure of eukaryotic proteasomes.

It localises to the cytoplasm. The catalysed reaction is Hydrolysis of proteins to small peptides in the presence of ATP and magnesium. alpha-casein is the usual test substrate. In the absence of ATP, only oligopeptides shorter than five residues are hydrolyzed (such as succinyl-Leu-Tyr-|-NHMec, and Leu-Tyr-Leu-|-Tyr-Trp, in which cleavage of the -Tyr-|-Leu- and -Tyr-|-Trp bonds also occurs).. Functionally, cleaves peptides in various proteins in a process that requires ATP hydrolysis. Has a chymotrypsin-like activity. Plays a major role in the degradation of misfolded proteins. This Nitrosomonas europaea (strain ATCC 19718 / CIP 103999 / KCTC 2705 / NBRC 14298) protein is ATP-dependent Clp protease proteolytic subunit.